We begin with the raw amino-acid sequence, 282 residues long: tRNA U34 carboxymethyltransferase (282 aa).

Carboxy-S-adenosyl-L-methionine-binding positions include Lys-54, Trp-68, Lys-73, Gly-92, Asp-114–Ser-116, Tyr-161, and Arg-276.

It belongs to the class I-like SAM-binding methyltransferase superfamily. CmoB family. In terms of assembly, homotetramer.

The catalysed reaction is carboxy-S-adenosyl-L-methionine + 5-hydroxyuridine(34) in tRNA = 5-carboxymethoxyuridine(34) in tRNA + S-adenosyl-L-homocysteine + H(+). In terms of biological role, catalyzes carboxymethyl transfer from carboxy-S-adenosyl-L-methionine (Cx-SAM) to 5-hydroxyuridine (ho5U) to form 5-carboxymethoxyuridine (cmo5U) at position 34 in tRNAs. The sequence is that of tRNA U34 carboxymethyltransferase from Campylobacter fetus subsp. fetus (strain 82-40).